We begin with the raw amino-acid sequence, 306 residues long: Erythromycin 3''-O-methyltransferase (306 aa).

Residues Leu157 and His162 each contribute to the S-adenosyl-L-methionine site.

This sequence belongs to the methyltransferase superfamily.

The catalysed reaction is erythromycin C + S-adenosyl-L-methionine = erythromycin A + S-adenosyl-L-homocysteine + H(+). The enzyme catalyses erythromycin D + S-adenosyl-L-methionine = erythromycin B + S-adenosyl-L-homocysteine + H(+). Its pathway is antibiotic biosynthesis; erythromycin biosynthesis. Functionally, S-adenosyl-L-methionine-dependent O-methyltransferase that catalyzes the last step in the erythromycin biosynthesis pathway. Methylates the position 3 of the mycarosyl moiety of erythromycin C, forming the most active form of the antibiotic, erythromycin A. Can also methylate the precursor erythromycin D, forming erythromycin B. In Saccharopolyspora erythraea (strain ATCC 11635 / DSM 40517 / JCM 4748 / NBRC 13426 / NCIMB 8594 / NRRL 2338), this protein is Erythromycin 3''-O-methyltransferase (eryG).